Here is a 160-residue protein sequence, read N- to C-terminus: uncharacterized protein (160 aa).

In terms of domain architecture, N-acetyltransferase spans 5–160 (ISLSFYKPEH…GEQLILHHFL (156 aa)).

This is an uncharacterized protein from Bacillus subtilis (strain 168).